The following is a 371-amino-acid chain: Ferredoxin--NADP reductase, apicoplast (371 aa).

Residues 1–18 (MKIRFVFILSVLISGVCC) constitute an apicoplast transit peptide. FAD-binding positions include Lys68, 155 to 159 (ARLYS), 172 to 179 (AIKIHKYE), 192 to 194 (YCS), and Thr235. An FAD-binding FR-type domain is found at 68–218 (KNPLKCKIVD…TGAHGYFNLP (151 aa)). Lys174 serves as a coordination point for NADP(+). Residues 272–273 (VY), Ser302, 313–315 (YVQ), and 341–343 (HKS) each bind NADP(+). Residues Lys342 and Tyr371 each contribute to the FAD site.

Belongs to the ferredoxin--NADP reductase type 1 family. As to quaternary structure, monomer. Homodimer; disulfide linked. NADP binding accelerates formation of an inactive, disulfide-linked homodimer when the protein is exposed to air for 24 hours or more (in vitro); the physiological relevance of this is uncertain. FAD serves as cofactor.

The protein localises to the plastid. Its subcellular location is the apicoplast. It carries out the reaction 2 reduced [2Fe-2S]-[ferredoxin] + NADP(+) + H(+) = 2 oxidized [2Fe-2S]-[ferredoxin] + NADPH. Its function is as follows. May play a role in the terminal step of the DOXP/MEP pathway for isoprenoid precursor biosynthesis. The polypeptide is Ferredoxin--NADP reductase, apicoplast (Plasmodium falciparum (isolate 3D7)).